Here is a 1400-residue protein sequence, read N- to C-terminus: DNA-directed RNA polymerase subunit beta' (1400 aa).

Zn(2+)-binding residues include cysteine 71, cysteine 73, cysteine 86, and cysteine 89. Positions 462, 464, and 466 each coordinate Mg(2+). Residues cysteine 811, cysteine 885, cysteine 892, and cysteine 895 each coordinate Zn(2+).

Belongs to the RNA polymerase beta' chain family. The RNAP catalytic core consists of 2 alpha, 1 beta, 1 beta' and 1 omega subunit. When a sigma factor is associated with the core the holoenzyme is formed, which can initiate transcription. It depends on Mg(2+) as a cofactor. Zn(2+) serves as cofactor.

It carries out the reaction RNA(n) + a ribonucleoside 5'-triphosphate = RNA(n+1) + diphosphate. DNA-dependent RNA polymerase catalyzes the transcription of DNA into RNA using the four ribonucleoside triphosphates as substrates. In Brucella suis biovar 1 (strain 1330), this protein is DNA-directed RNA polymerase subunit beta'.